Here is a 953-residue protein sequence, read N- to C-terminus: Isoleucine--tRNA ligase (953 aa).

The 'HIGH' region motif lies at 57–67; the sequence is PYANGDIHIGH. An L-isoleucyl-5'-AMP-binding site is contributed by E582. Positions 623–627 match the 'KMSKS' region motif; sequence KMSKS. Residue K626 participates in ATP binding. Zn(2+)-binding residues include C916, C919, C936, and C939.

Belongs to the class-I aminoacyl-tRNA synthetase family. IleS type 1 subfamily. Monomer. Zn(2+) serves as cofactor.

It is found in the cytoplasm. It carries out the reaction tRNA(Ile) + L-isoleucine + ATP = L-isoleucyl-tRNA(Ile) + AMP + diphosphate. Its function is as follows. Catalyzes the attachment of isoleucine to tRNA(Ile). As IleRS can inadvertently accommodate and process structurally similar amino acids such as valine, to avoid such errors it has two additional distinct tRNA(Ile)-dependent editing activities. One activity is designated as 'pretransfer' editing and involves the hydrolysis of activated Val-AMP. The other activity is designated 'posttransfer' editing and involves deacylation of mischarged Val-tRNA(Ile). The sequence is that of Isoleucine--tRNA ligase from Bordetella avium (strain 197N).